The primary structure comprises 337 residues: Phenylalanine--tRNA ligase alpha subunit (337 aa).

Residue Glu-258 participates in Mg(2+) binding.

Belongs to the class-II aminoacyl-tRNA synthetase family. Phe-tRNA synthetase alpha subunit type 1 subfamily. Tetramer of two alpha and two beta subunits. It depends on Mg(2+) as a cofactor.

The protein resides in the cytoplasm. The catalysed reaction is tRNA(Phe) + L-phenylalanine + ATP = L-phenylalanyl-tRNA(Phe) + AMP + diphosphate + H(+). This Burkholderia vietnamiensis (strain G4 / LMG 22486) (Burkholderia cepacia (strain R1808)) protein is Phenylalanine--tRNA ligase alpha subunit.